The primary structure comprises 144 residues: Maximins 7/H1 (144 aa).

The N-terminal stretch at 1-18 is a signal peptide; the sequence is MNFKYIVAVSFLIASAYA. A propeptide spanning residues 19 to 43 is cleaved from the precursor; that stretch reads RSEENDEQSLSQRDVLEEESLREIR. N70 bears the Asparagine amide mark. Positions 74 to 123 are excised as a propeptide; sequence TAEDHEVMKRLEAVMRDLDSLDYPEEAAERETRGFNQEEIANLFTKKEKR. L143 is modified (leucine amide).

Belongs to the bombinin family. In terms of tissue distribution, expressed by the skin glands.

The protein resides in the secreted. Its function is as follows. Maximin-7 shows antimicrobial activity against bacteria and against the fungus C.albicans. It has little hemolytic activity. In terms of biological role, maximin-H1 shows antibacterial activity against both Gram-positive and Gram-negative bacteria. It also shows antimicrobial activity against the fungus C.albicans. Shows strong hemolytic activity. This chain is Maximins 7/H1, found in Bombina maxima (Giant fire-bellied toad).